Reading from the N-terminus, the 402-residue chain is Oxysterol-binding protein 8 (402 aa).

Residues 328-361 (DRIALEEGNLDVAAKEKHNLEEKQREDKRQRVAE) are a coiled coil.

It belongs to the OSBP family.

The chain is Oxysterol-binding protein 8 (osbH) from Dictyostelium discoideum (Social amoeba).